Reading from the N-terminus, the 380-residue chain is Cytochrome b (380 aa).

The next 4 helical transmembrane spans lie at 33-53 (FGSLLGLCLASQILTGLFLAM), 77-98 (WLIRNMHANGASFFFICLYLHI), 113-133 (WNVGVVLLLLVMMTAFVGYVL), and 178-198 (FFAFHFLFPFVILAAAVLHLL). Heme b-binding residues include His-83 and His-97. Heme b is bound by residues His-182 and His-196. An a ubiquinone-binding site is contributed by His-201. 4 consecutive transmembrane segments (helical) span residues 226–246 (YKDLLGFAVLLMGLTSLALFS), 288–308 (LGGVLALLASILILMVVPFLH), 320–340 (ASQFLFWTLVADVVVLTWIGG), and 347–367 (FIIIGQVASVLYFSLFLVLFP).

The protein belongs to the cytochrome b family. The cytochrome bc1 complex contains 3 respiratory subunits (MT-CYB, CYC1 and UQCRFS1), 2 core proteins (UQCRC1 and UQCRC2) and probably 6 low-molecular weight proteins. Requires heme b as cofactor.

It localises to the mitochondrion inner membrane. Its function is as follows. Component of the ubiquinol-cytochrome c reductase complex (complex III or cytochrome b-c1 complex) that is part of the mitochondrial respiratory chain. The b-c1 complex mediates electron transfer from ubiquinol to cytochrome c. Contributes to the generation of a proton gradient across the mitochondrial membrane that is then used for ATP synthesis. The protein is Cytochrome b (mt-cyb) of Scomber scombrus (Atlantic mackerel).